The sequence spans 231 residues: Uridylate kinase (231 aa).

Position 9–12 (9–12 (KLSG)) interacts with ATP. G49 provides a ligand contact to UMP. 2 residues coordinate ATP: G50 and R54. Residues D69 and 130 to 137 (AGMPYFST) each bind UMP. Residues N158, Y164, and D167 each contribute to the ATP site.

The protein belongs to the UMP kinase family. As to quaternary structure, homohexamer.

The protein localises to the cytoplasm. It carries out the reaction UMP + ATP = UDP + ADP. The protein operates within pyrimidine metabolism; CTP biosynthesis via de novo pathway; UDP from UMP (UMPK route): step 1/1. With respect to regulation, inhibited by UTP. Catalyzes the reversible phosphorylation of UMP to UDP. This chain is Uridylate kinase, found in Tropheryma whipplei (strain Twist) (Whipple's bacillus).